The primary structure comprises 87 residues: DNA-directed RNA polymerase subunit omega (87 aa).

This sequence belongs to the RNA polymerase subunit omega family. As to quaternary structure, the RNAP catalytic core consists of 2 alpha, 1 beta, 1 beta' and 1 omega subunit. When a sigma factor is associated with the core the holoenzyme is formed, which can initiate transcription.

The enzyme catalyses RNA(n) + a ribonucleoside 5'-triphosphate = RNA(n+1) + diphosphate. In terms of biological role, promotes RNA polymerase assembly. Latches the N- and C-terminal regions of the beta' subunit thereby facilitating its interaction with the beta and alpha subunits. The chain is DNA-directed RNA polymerase subunit omega from Azotobacter vinelandii (strain DJ / ATCC BAA-1303).